A 151-amino-acid chain; its full sequence is Inactive oocyte-specific homeobox protein 2 (151 aa).

Residues 1 to 97 are disordered; it reads MAEGPSLHPK…PMASRKFRKE (97 aa). The span at 37 to 54 shows a compositional bias: polar residues; that stretch reads MRQSPLVTPGSTTKSSLS.

Belongs to the paired homeobox family. Obox subfamily. Specifically expressed in oocytes and early embryos.

In contrast to other Obox family proteins, displays a truncated homeobox domain and does not bind DNA. In Mus musculus (Mouse), this protein is Inactive oocyte-specific homeobox protein 2.